The chain runs to 51 residues: UPF0391 membrane protein Psyc_0130 (51 aa).

2 helical membrane-spanning segments follow: residues 6-26 and 28-47; these read IIFAVIALLASFLGFGGVAGL and ANFAYILLALAVILFIVAFV.

It belongs to the UPF0391 family.

The protein resides in the cell membrane. This Psychrobacter arcticus (strain DSM 17307 / VKM B-2377 / 273-4) protein is UPF0391 membrane protein Psyc_0130.